Consider the following 419-residue polypeptide: D-inositol 3-phosphate glycosyltransferase (419 aa).

A 1D-myo-inositol 3-phosphate-binding site is contributed by His-9. UDP-N-acetyl-alpha-D-glucosamine is bound by residues 15–16 (QP) and Gly-23. 1D-myo-inositol 3-phosphate is bound by residues 20 to 25 (DAGGMN), Lys-78, Tyr-110, Thr-134, and Arg-154. UDP-N-acetyl-alpha-D-glucosamine-binding residues include Arg-231, Lys-236, and Arg-295. Mg(2+) contacts are provided by Tyr-304, Arg-305, and Ala-307. Residues Glu-317 and Glu-325 each coordinate UDP-N-acetyl-alpha-D-glucosamine. Thr-331 contributes to the Mg(2+) binding site.

It belongs to the glycosyltransferase group 1 family. MshA subfamily. In terms of assembly, homodimer.

The enzyme catalyses 1D-myo-inositol 3-phosphate + UDP-N-acetyl-alpha-D-glucosamine = 1D-myo-inositol 2-acetamido-2-deoxy-alpha-D-glucopyranoside 3-phosphate + UDP + H(+). Catalyzes the transfer of a N-acetyl-glucosamine moiety to 1D-myo-inositol 3-phosphate to produce 1D-myo-inositol 2-acetamido-2-deoxy-glucopyranoside 3-phosphate in the mycothiol biosynthesis pathway. In Corynebacterium jeikeium (strain K411), this protein is D-inositol 3-phosphate glycosyltransferase.